Consider the following 51-residue polypeptide: uncharacterized protein (51 aa).

This is an uncharacterized protein from Rickettsia conorii (strain ATCC VR-613 / Malish 7).